A 107-amino-acid chain; its full sequence is MDKVNNNCCCGENAKPCCTDPNSGCCCVSETNNCCKSDKKECCTGTGEGCKWTGCKCCQPAKSGCCCGDKAKACCTDPNSGCCCSSKTNKCCDSTNKTECKTCECCK.

The protein belongs to the metallothionein superfamily. Type 7 family.

The metallothioneins are involved in the cellular sequestration of toxic metal ions. Binds 12 cadmium ions per molecule. This Tetrahymena thermophila protein is Metallothionein-1.